Reading from the N-terminus, the 208-residue chain is Protein-L-isoaspartate O-methyltransferase (208 aa).

Residue Ser59 is part of the active site.

Belongs to the methyltransferase superfamily. L-isoaspartyl/D-aspartyl protein methyltransferase family.

It is found in the cytoplasm. The enzyme catalyses [protein]-L-isoaspartate + S-adenosyl-L-methionine = [protein]-L-isoaspartate alpha-methyl ester + S-adenosyl-L-homocysteine. Catalyzes the methyl esterification of L-isoaspartyl residues in peptides and proteins that result from spontaneous decomposition of normal L-aspartyl and L-asparaginyl residues. It plays a role in the repair and/or degradation of damaged proteins. This is Protein-L-isoaspartate O-methyltransferase from Escherichia coli O1:K1 / APEC.